Consider the following 345-residue polypeptide: Fibronectin type 3 and ankyrin repeat domains protein 1 (345 aa).

In terms of domain architecture, Fibronectin type-III spans 8 to 108 (PPSKPHPPVV…LVSVSTTREP (101 aa)). ANK repeat units lie at residues 109 to 139 (ISSEHLHRAVSVNDEDLLVRILQGGRVKVDV), 143 to 172 (FGFTALMVAAQKGYTRLVKILVSNGTDVNL), 176 to 205 (SGKDSLMLACYAGHLDVVKYLRRHGASWQA), 209 to 238 (GGCTALHWAADGGHCSVIEWMIKDGCEVDV), 243 to 273 (SGWTPLMRVSAVSGNQRVASLLIDAGANVNV), and 277 to 306 (NGKTPLMVAVLNNHEELVQLLLDKGADASV).

As to quaternary structure, interacts with COPS5; regulates the phosphorylation of JUN and the transcriptional activity of AP-1. Interacts with RYBP; may prevent the ubiquitin-mediated proteasomal degradation of FANK1. Post-translationally, polyubiquitinated. Polyubiquitination leads to proteasomal degradation. In terms of tissue distribution, mostly restricted to testis.

It is found in the nucleus. The protein localises to the cytoplasm. Its subcellular location is the cytosol. It localises to the cytoskeleton. The protein resides in the cilium basal body. It is found in the cell projection. The protein localises to the cilium. In terms of biological role, through the activation of JUN and AP-1-mediated transcription, may regulate apoptosis. The protein is Fibronectin type 3 and ankyrin repeat domains protein 1 of Homo sapiens (Human).